The following is a 373-amino-acid chain: SUN domain-containing protein 5 (373 aa).

The Nuclear segment spans residues 1–103 (MPRTRNIGAL…LFCQKVMEKM (103 aa)). The helical transmembrane segment at 104 to 120 (GLLVLCVFGFWMFSMHL) threads the bilayer. At 121-373 (PSKVEVWQDD…PKDSHLEPLS (253 aa)) the chain is on the perinuclear space side. Residues 136–180 (LQSLRMYQEKVRHHTGEIQDLRGSMNQLIAKLQKMEAISDEQKMA) are a coiled coil. The 159-residue stretch at 204 to 362 (ASIDFEHTSA…YRVRVHGSVT (159 aa)) folds into the SUN domain.

Probable homotrimer. Interacts with DNAJB13. Highly glycosylated in the Golgi apparatus during spermiogenesis. In terms of tissue distribution, testis-specific, abundantly expressed in spermatocytes and round spermatids.

The protein resides in the nucleus inner membrane. Its subcellular location is the golgi apparatus. Functionally, plays an essential role in anchoring sperm head to the tail. Is responsible for the attachment of the coupling apparatus to the sperm nuclear envelope. The protein is SUN domain-containing protein 5 (Sun5) of Mus musculus (Mouse).